The following is a 157-amino-acid chain: 2-C-methyl-D-erythritol 2,4-cyclodiphosphate synthase (157 aa).

A divalent metal cation is bound by residues Asp-8 and His-10. 4-CDP-2-C-methyl-D-erythritol 2-phosphate is bound by residues 8–10 (DVH) and 34–35 (HS). Residue His-42 coordinates a divalent metal cation. 4-CDP-2-C-methyl-D-erythritol 2-phosphate contacts are provided by residues 56 to 58 (DIG), 61 to 65 (FPDTD), 100 to 106 (AQAPKMA), 132 to 135 (TTTE), Phe-139, and Arg-142.

Belongs to the IspF family. In terms of assembly, homotrimer. Requires a divalent metal cation as cofactor.

It catalyses the reaction 4-CDP-2-C-methyl-D-erythritol 2-phosphate = 2-C-methyl-D-erythritol 2,4-cyclic diphosphate + CMP. It participates in isoprenoid biosynthesis; isopentenyl diphosphate biosynthesis via DXP pathway; isopentenyl diphosphate from 1-deoxy-D-xylulose 5-phosphate: step 4/6. In terms of biological role, involved in the biosynthesis of isopentenyl diphosphate (IPP) and dimethylallyl diphosphate (DMAPP), two major building blocks of isoprenoid compounds. Catalyzes the conversion of 4-diphosphocytidyl-2-C-methyl-D-erythritol 2-phosphate (CDP-ME2P) to 2-C-methyl-D-erythritol 2,4-cyclodiphosphate (ME-CPP) with a corresponding release of cytidine 5-monophosphate (CMP). This chain is 2-C-methyl-D-erythritol 2,4-cyclodiphosphate synthase, found in Pseudomonas savastanoi pv. phaseolicola (strain 1448A / Race 6) (Pseudomonas syringae pv. phaseolicola (strain 1448A / Race 6)).